Consider the following 142-residue polypeptide: Large ribosomal subunit protein uL16 (142 aa).

The protein belongs to the universal ribosomal protein uL16 family. In terms of assembly, part of the 50S ribosomal subunit.

Its function is as follows. Binds 23S rRNA and is also seen to make contacts with the A and possibly P site tRNAs. The polypeptide is Large ribosomal subunit protein uL16 (Thermosipho africanus (strain TCF52B)).